The chain runs to 58 residues: MDISNQLTLEQEFELVLYKQKIDPLNLEQAQNLLVETLKTMMLKDNIIKYVVKNSHFR.

The protein belongs to the ycf18/nblA family.

It localises to the plastid. The protein localises to the chloroplast. This is an uncharacterized protein from Porphyra purpurea (Red seaweed).